A 699-amino-acid chain; its full sequence is Integrator complex subunit 10 (699 aa).

Serine 220 and serine 370 each carry phosphoserine. A Glycyl lysine isopeptide (Lys-Gly) (interchain with G-Cter in SUMO2) cross-link involves residue lysine 453.

The protein belongs to the Integrator subunit 10 family. As to quaternary structure, component of the Integrator complex, composed of core subunits INTS1, INTS2, INTS3, INTS4, INTS5, INTS6, INTS7, INTS8, INTS9/RC74, INTS10, INTS11/CPSF3L, INTS12, INTS13, INTS14 and INTS15. The core complex associates with protein phosphatase 2A subunits PPP2CA and PPP2R1A, to form the Integrator-PP2A (INTAC) complex. INTS10 is part of the tail subcomplex, composed of INTS10, INTS13, INTS14 and INTS15.

The protein localises to the nucleus. Functionally, component of the integrator complex, a multiprotein complex that terminates RNA polymerase II (Pol II) transcription in the promoter-proximal region of genes. The integrator complex provides a quality checkpoint during transcription elongation by driving premature transcription termination of transcripts that are unfavorably configured for transcriptional elongation: the complex terminates transcription by (1) catalyzing dephosphorylation of the C-terminal domain (CTD) of Pol II subunit POLR2A/RPB1 and SUPT5H/SPT5, (2) degrading the exiting nascent RNA transcript via endonuclease activity and (3) promoting the release of Pol II from bound DNA. The integrator complex is also involved in terminating the synthesis of non-coding Pol II transcripts, such as enhancer RNAs (eRNAs), small nuclear RNAs (snRNAs), telomerase RNAs and long non-coding RNAs (lncRNAs). Within the integrator complex, INTS10 is part of the integrator tail module that acts as a platform for the recruitment of transcription factors at promoters. May be not involved in the recruitment of cytoplasmic dynein to the nuclear envelope, probably as component of the integrator complex. This is Integrator complex subunit 10 (INTS10) from Macaca fascicularis (Crab-eating macaque).